The sequence spans 295 residues: UDP-N-acetylenolpyruvoylglucosamine reductase (295 aa).

In terms of domain architecture, FAD-binding PCMH-type spans 26–189 (VGGRADVLFK…VEAEFKGVNS (164 aa)). Arginine 169 is a catalytic residue. Catalysis depends on cysteine 218, which acts as the Proton donor. Glutamate 288 is an active-site residue.

It belongs to the MurB family. FAD serves as cofactor.

It is found in the cytoplasm. It carries out the reaction UDP-N-acetyl-alpha-D-muramate + NADP(+) = UDP-N-acetyl-3-O-(1-carboxyvinyl)-alpha-D-glucosamine + NADPH + H(+). It functions in the pathway cell wall biogenesis; peptidoglycan biosynthesis. Functionally, cell wall formation. The protein is UDP-N-acetylenolpyruvoylglucosamine reductase of Wolbachia pipientis wMel.